The chain runs to 251 residues: Ubiquinone/menaquinone biosynthesis C-methyltransferase UbiE (251 aa).

S-adenosyl-L-methionine contacts are provided by residues Thr74, Asp95, and 123–124; that span reads NA.

The protein belongs to the class I-like SAM-binding methyltransferase superfamily. MenG/UbiE family.

It catalyses the reaction a 2-demethylmenaquinol + S-adenosyl-L-methionine = a menaquinol + S-adenosyl-L-homocysteine + H(+). It carries out the reaction a 2-methoxy-6-(all-trans-polyprenyl)benzene-1,4-diol + S-adenosyl-L-methionine = a 5-methoxy-2-methyl-3-(all-trans-polyprenyl)benzene-1,4-diol + S-adenosyl-L-homocysteine + H(+). It functions in the pathway quinol/quinone metabolism; menaquinone biosynthesis; menaquinol from 1,4-dihydroxy-2-naphthoate: step 2/2. The protein operates within cofactor biosynthesis; ubiquinone biosynthesis. In terms of biological role, methyltransferase required for the conversion of demethylmenaquinol (DMKH2) to menaquinol (MKH2) and the conversion of 2-polyprenyl-6-methoxy-1,4-benzoquinol (DDMQH2) to 2-polyprenyl-3-methyl-6-methoxy-1,4-benzoquinol (DMQH2). This Shewanella woodyi (strain ATCC 51908 / MS32) protein is Ubiquinone/menaquinone biosynthesis C-methyltransferase UbiE.